The chain runs to 365 residues: Aminomethyltransferase (365 aa).

The protein belongs to the GcvT family. In terms of assembly, the glycine cleavage system is composed of four proteins: P, T, L and H.

The catalysed reaction is N(6)-[(R)-S(8)-aminomethyldihydrolipoyl]-L-lysyl-[protein] + (6S)-5,6,7,8-tetrahydrofolate = N(6)-[(R)-dihydrolipoyl]-L-lysyl-[protein] + (6R)-5,10-methylene-5,6,7,8-tetrahydrofolate + NH4(+). The glycine cleavage system catalyzes the degradation of glycine. This chain is Aminomethyltransferase, found in Desulfitobacterium hafniense (strain DSM 10664 / DCB-2).